We begin with the raw amino-acid sequence, 43 residues long: Protein PsbN (43 aa).

A helical transmembrane segment spans residues T5–V25.

Belongs to the PsbN family.

It is found in the plastid. It localises to the chloroplast thylakoid membrane. Functionally, may play a role in photosystem I and II biogenesis. This is Protein PsbN from Cyanidioschyzon merolae (strain NIES-3377 / 10D) (Unicellular red alga).